The chain runs to 161 residues: uncharacterized protein (161 aa).

Helical transmembrane passes span 22–42 (LFFINVGLAAVAMLVAGVFGH), 43–63 (LTVGMFLGLGLLLGLLNALLV), 89–109 (LAIITILGLIIAYIFRPAGLG), and 110–130 (VVFGLAFFQVLLVATTALPVL). A disordered region spans residues 141–161 (VATYSSNGQTGGSEGRSASDD).

This sequence to M.leprae ML1138.

Its subcellular location is the cell membrane. This is an uncharacterized protein from Mycobacterium bovis (strain ATCC BAA-935 / AF2122/97).